The following is an 89-amino-acid chain: Small ribosomal subunit protein uS15 (89 aa).

This sequence belongs to the universal ribosomal protein uS15 family. As to quaternary structure, part of the 30S ribosomal subunit. Forms a bridge to the 50S subunit in the 70S ribosome, contacting the 23S rRNA.

Functionally, one of the primary rRNA binding proteins, it binds directly to 16S rRNA where it helps nucleate assembly of the platform of the 30S subunit by binding and bridging several RNA helices of the 16S rRNA. Forms an intersubunit bridge (bridge B4) with the 23S rRNA of the 50S subunit in the ribosome. The sequence is that of Small ribosomal subunit protein uS15 from Chlamydia caviae (strain ATCC VR-813 / DSM 19441 / 03DC25 / GPIC) (Chlamydophila caviae).